We begin with the raw amino-acid sequence, 100 residues long: Large ribosomal subunit protein uL23 (100 aa).

This sequence belongs to the universal ribosomal protein uL23 family. Part of the 50S ribosomal subunit. Contacts protein L29, and trigger factor when it is bound to the ribosome.

In terms of biological role, one of the early assembly proteins it binds 23S rRNA. One of the proteins that surrounds the polypeptide exit tunnel on the outside of the ribosome. Forms the main docking site for trigger factor binding to the ribosome. The protein is Large ribosomal subunit protein uL23 of Pseudoalteromonas atlantica (strain T6c / ATCC BAA-1087).